We begin with the raw amino-acid sequence, 1140 residues long: Eukaryotic translation initiation factor 3 subunit A (1140 aa).

In terms of domain architecture, PCI spans 319–502; the sequence is LQRMAAHVLL…NSIYFGTDLT (184 aa). Basic and acidic residues-rich tracts occupy residues 589 to 624, 830 to 900, and 921 to 984; these read QNNA…EERE, AAEE…RGGD, and ERND…EPDS. 2 disordered regions span residues 589 to 632 and 830 to 1140; these read QNNA…QNEI and AAEE…VKRR. Over residues 987-998 the composition is skewed to low complexity; the sequence is AAGAKDAGGAPA. Composition is skewed to basic and acidic residues over residues 999–1050, 1058–1086, and 1109–1130; these read SRDD…EPQR, DAPR…RGDQ, and PRDE…KGGD.

The protein belongs to the eIF-3 subunit A family. Component of the eukaryotic translation initiation factor 3 (eIF-3) complex. The eIF-3 complex interacts with pix.

It is found in the cytoplasm. In terms of biological role, RNA-binding component of the eukaryotic translation initiation factor 3 (eIF-3) complex, which is involved in protein synthesis of a specialized repertoire of mRNAs and, together with other initiation factors, stimulates binding of mRNA and methionyl-tRNAi to the 40S ribosome. The eIF-3 complex specifically targets and initiates translation of a subset of mRNAs involved in cell proliferation. The sequence is that of Eukaryotic translation initiation factor 3 subunit A from Drosophila ananassae (Fruit fly).